A 240-amino-acid chain; its full sequence is 7-cyano-7-deazaguanine synthase (240 aa).

ATP is bound at residue 9 to 19; sequence FSGGLDSTACL. The Zn(2+) site is built by Cys-195, Cys-210, Cys-213, and Cys-216.

It belongs to the QueC family. It depends on Zn(2+) as a cofactor.

It carries out the reaction 7-carboxy-7-deazaguanine + NH4(+) + ATP = 7-cyano-7-deazaguanine + ADP + phosphate + H2O + H(+). It participates in purine metabolism; 7-cyano-7-deazaguanine biosynthesis. Functionally, catalyzes the ATP-dependent conversion of 7-carboxy-7-deazaguanine (CDG) to 7-cyano-7-deazaguanine (preQ(0)). The polypeptide is 7-cyano-7-deazaguanine synthase (Pyrococcus furiosus (strain ATCC 43587 / DSM 3638 / JCM 8422 / Vc1)).